The primary structure comprises 149 residues: Nucleoside diphosphate kinase (149 aa).

The ATP site is built by lysine 9, phenylalanine 57, arginine 85, threonine 91, arginine 102, and asparagine 112. The active-site Pros-phosphohistidine intermediate is histidine 115.

Belongs to the NDK family. Requires Mg(2+) as cofactor.

The protein resides in the cytoplasm. It catalyses the reaction a 2'-deoxyribonucleoside 5'-diphosphate + ATP = a 2'-deoxyribonucleoside 5'-triphosphate + ADP. The catalysed reaction is a ribonucleoside 5'-diphosphate + ATP = a ribonucleoside 5'-triphosphate + ADP. Its function is as follows. Major role in the synthesis of nucleoside triphosphates other than ATP. The ATP gamma phosphate is transferred to the NDP beta phosphate via a ping-pong mechanism, using a phosphorylated active-site intermediate. This is Nucleoside diphosphate kinase from Methanosarcina barkeri (strain Fusaro / DSM 804).